A 212-amino-acid polypeptide reads, in one-letter code: Acyl-homoserine-lactone synthase (212 aa).

It belongs to the autoinducer synthase family.

It catalyses the reaction a fatty acyl-[ACP] + S-adenosyl-L-methionine = an N-acyl-L-homoserine lactone + S-methyl-5'-thioadenosine + holo-[ACP] + H(+). Required for the synthesis of OHHL (N-(3-oxohexanoyl)-L-homoserine lactone), an autoinducer molecule which binds to ExpR and thus acts in virulence (soft rot disease) through the activation of genes for plant tissue macerating enzymes. This Dickeya dadantii (strain 3937) (Erwinia chrysanthemi (strain 3937)) protein is Acyl-homoserine-lactone synthase (expI).